We begin with the raw amino-acid sequence, 364 residues long: Nucleoside ABC transporter permease protein NupB (364 aa).

8 helical membrane-spanning segments follow: residues 9–29 (LVPLIAIVFGFLLGAIIMLAF), 77–99 (FNIGMSGQALAGWISSMWFALSF), 105–125 (LLMIPLVVIIGMVFGAFMGFI), 138–158 (VITTIMLNYIMLFFSTFMIHS), 195–215 (TLNIGLIIAIIALVIMAIIFT), 244–264 (LILSMVVAGALAGLGGVVYGF), 284–304 (MAVALLGGNSPIGILFAALLF), and 326–346 (VVTAAIIFFIAVKFIIEVMLP).

It belongs to the binding-protein-dependent transport system permease family. In terms of assembly, the complex is composed of two ATP-binding proteins (NupA), two transmembrane proteins (NupB and NupC) and a solute-binding protein (BmpA).

It localises to the cell membrane. Part of an ABC transporter complex involved in the uptake of all common nucleosides. Responsible for the translocation of the substrate across the membrane. This is Nucleoside ABC transporter permease protein NupB from Lactococcus lactis subsp. cremoris (strain MG1363).